We begin with the raw amino-acid sequence, 628 residues long: Chaperone protein HtpG (628 aa).

The tract at residues 1–337 (MSEKKYTFET…SADLPLNVSR (337 aa)) is a; substrate-binding. Positions 338-554 (EILQHNKVID…DYGMSLHMQK (217 aa)) are b. Residues 555-628 (MMEEAGQSFM…FVKLVNKYIR (74 aa)) form a c region.

This sequence belongs to the heat shock protein 90 family. As to quaternary structure, homodimer.

It localises to the cytoplasm. Functionally, molecular chaperone. Has ATPase activity. This Francisella tularensis subsp. tularensis (strain WY96-3418) protein is Chaperone protein HtpG.